Consider the following 1272-residue polypeptide: Vitamin B12-dependent ribonucleotide reductase (1272 aa).

Substrate-binding positions include S153, 198 to 199 (AC), G230, 474 to 478 (NPCSE), and 675 to 679 (PTGTI). C199 and C487 are oxidised to a cystine. The Proton acceptor role is filled by N474. Catalysis depends on C476, which acts as the Cysteine radical intermediate. The active-site Proton acceptor is E478. The segment at 1120-1147 (TLVSSNEGDRAASEPKGSATAAPARGSA) is disordered.

Belongs to the ribonucleoside diphosphate reductase class-2 family. Adenosylcob(III)alamin serves as cofactor.

It carries out the reaction a 2'-deoxyribonucleoside 5'-diphosphate + [thioredoxin]-disulfide + H2O = a ribonucleoside 5'-diphosphate + [thioredoxin]-dithiol. Functionally, catalyzes the reduction of ribonucleotides to deoxyribonucleotides. May function to provide a pool of deoxyribonucleotide precursors for DNA repair during oxygen limitation and/or for immediate growth after restoration of oxygen. In Agrobacterium fabrum (strain C58 / ATCC 33970) (Agrobacterium tumefaciens (strain C58)), this protein is Vitamin B12-dependent ribonucleotide reductase (nrdJ).